A 577-amino-acid polypeptide reads, in one-letter code: Arginine--tRNA ligase (577 aa).

A 'HIGH' region motif is present at residues 122 to 132 (PNVAKEMHVGH).

It belongs to the class-I aminoacyl-tRNA synthetase family. Monomer.

The protein resides in the cytoplasm. The enzyme catalyses tRNA(Arg) + L-arginine + ATP = L-arginyl-tRNA(Arg) + AMP + diphosphate. The sequence is that of Arginine--tRNA ligase from Escherichia coli O81 (strain ED1a).